The following is a 490-amino-acid chain: Metalloreductase STEAP2 (490 aa).

NADP(+) contacts are provided by residues Ser38 to Phe41, Ser60 to Arg61, Ile93 to Ser100, Asn118, and Ala151. FAD is bound by residues Trp152 and Asp160. A helical transmembrane segment spans residues Leu208–Leu228. Residue Tyr229 coordinates Fe(3+). The helical transmembrane segment at Leu259–Ala279 threads the bilayer. In terms of domain architecture, Ferric oxidoreductase spans Leu259–Thr407. The FAD site is built by Gln281 and Arg302. A run of 4 helical transmembrane segments spans residues Leu305–Met325, Met359–Ile379, Phe393–Tyr413, and Phe432–Pro452. A heme b-binding site is contributed by His316. Fe(3+) is bound at residue Tyr319. Residues Ser378 and Gln395 each contribute to the FAD site. Residue His409 participates in heme b binding. The residue at position 483 (Ser483) is a Phosphoserine.

Belongs to the STEAP family. It depends on FAD as a cofactor. Requires heme b as cofactor. In terms of tissue distribution, expressed at high levels in prostate and at significantly lower levels in heart, brain, kidney, pancreas, and ovary.

The protein localises to the endosome membrane. It is found in the cell membrane. The catalysed reaction is 2 Fe(2+) + NADP(+) + H(+) = 2 Fe(3+) + NADPH. It carries out the reaction 2 Cu(+) + NADP(+) + H(+) = 2 Cu(2+) + NADPH. In terms of biological role, integral membrane protein that functions as a NADPH-dependent ferric-chelate reductase, using NADPH from one side of the membrane to reduce a Fe(3+) chelate that is bound on the other side of the membrane. Mediates sequential transmembrane electron transfer from NADPH to FAD and onto heme, and finally to the Fe(3+) chelate. Can also reduce Cu(2+) to Cu(1+). In Homo sapiens (Human), this protein is Metalloreductase STEAP2 (STEAP2).